We begin with the raw amino-acid sequence, 94 residues long: Large ribosomal subunit protein bL28 (94 aa).

The segment at 1 to 21 (MARRCEVTGRGTVSGNNVSHS) is disordered. Over residues 11-20 (GTVSGNNVSH) the composition is skewed to polar residues.

The protein belongs to the bacterial ribosomal protein bL28 family.

This chain is Large ribosomal subunit protein bL28, found in Leptospira borgpetersenii serovar Hardjo-bovis (strain JB197).